Consider the following 579-residue polypeptide: Nuclear hormone receptor family member nhr-47 (579 aa).

A DNA-binding region (nuclear receptor) is located at residues 8 to 83; it reads GTLCAVCDDI…VGMDKNSIQN (76 aa). 2 NR C4-type zinc fingers span residues 11–31 and 47–71; these read CAVCDDIATGKHYSVASCNGC and CQGNKDCPVNKGVRCACRYCRLQKC. Residues 87-128 form a disordered region; sequence RIGYTKRKRRHDDNDMEGGVHHSEHIRDGSSGSPQMNDESPE. Residues 104–114 show a composition bias toward basic and acidic residues; sequence GGVHHSEHIRD. An NR LBD domain is found at 164–553; the sequence is ADLHSYATLE…SLVKETSLGP (390 aa).

This sequence belongs to the nuclear hormone receptor family.

The protein resides in the nucleus. In terms of biological role, orphan nuclear receptor. This is Nuclear hormone receptor family member nhr-47 (nhr-47) from Caenorhabditis elegans.